The primary structure comprises 434 residues: ATP-dependent protease ATPase subunit HslU (434 aa).

Residues Val18, 60–65 (GVGKTE), Asp247, Glu312, and Arg384 each bind ATP.

It belongs to the ClpX chaperone family. HslU subfamily. A double ring-shaped homohexamer of HslV is capped on each side by a ring-shaped HslU homohexamer. The assembly of the HslU/HslV complex is dependent on binding of ATP.

The protein localises to the cytoplasm. In terms of biological role, ATPase subunit of a proteasome-like degradation complex; this subunit has chaperone activity. The binding of ATP and its subsequent hydrolysis by HslU are essential for unfolding of protein substrates subsequently hydrolyzed by HslV. HslU recognizes the N-terminal part of its protein substrates and unfolds these before they are guided to HslV for hydrolysis. The sequence is that of ATP-dependent protease ATPase subunit HslU from Phenylobacterium zucineum (strain HLK1).